The following is a 101-amino-acid chain: Small ribosomal subunit protein uS14 (101 aa).

Belongs to the universal ribosomal protein uS14 family. In terms of assembly, part of the 30S ribosomal subunit. Contacts proteins S3 and S10.

Functionally, binds 16S rRNA, required for the assembly of 30S particles and may also be responsible for determining the conformation of the 16S rRNA at the A site. The protein is Small ribosomal subunit protein uS14 of Synechococcus sp. (strain JA-2-3B'a(2-13)) (Cyanobacteria bacterium Yellowstone B-Prime).